We begin with the raw amino-acid sequence, 692 residues long: Elongation factor G (692 aa).

The 276-residue stretch at 8-283 (DKYRNIGIMA…AVVDYMPSPL (276 aa)) folds into the tr-type G domain. Residues 17 to 24 (AHIDAGKT), 81 to 85 (DTPGH), and 135 to 138 (NKMD) contribute to the GTP site.

It belongs to the TRAFAC class translation factor GTPase superfamily. Classic translation factor GTPase family. EF-G/EF-2 subfamily.

It is found in the cytoplasm. Its function is as follows. Catalyzes the GTP-dependent ribosomal translocation step during translation elongation. During this step, the ribosome changes from the pre-translocational (PRE) to the post-translocational (POST) state as the newly formed A-site-bound peptidyl-tRNA and P-site-bound deacylated tRNA move to the P and E sites, respectively. Catalyzes the coordinated movement of the two tRNA molecules, the mRNA and conformational changes in the ribosome. The sequence is that of Elongation factor G from Trichlorobacter lovleyi (strain ATCC BAA-1151 / DSM 17278 / SZ) (Geobacter lovleyi).